A 247-amino-acid polypeptide reads, in one-letter code: 5'-nucleotidase SurE (247 aa).

The a divalent metal cation site is built by Asp-8, Asp-9, Ser-39, and Asn-91.

Belongs to the SurE nucleotidase family. A divalent metal cation serves as cofactor.

It localises to the cytoplasm. It carries out the reaction a ribonucleoside 5'-phosphate + H2O = a ribonucleoside + phosphate. Its function is as follows. Nucleotidase that shows phosphatase activity on nucleoside 5'-monophosphates. This is 5'-nucleotidase SurE from Pelobacter propionicus (strain DSM 2379 / NBRC 103807 / OttBd1).